We begin with the raw amino-acid sequence, 142 residues long: Large ribosomal subunit protein bL17 (142 aa).

It belongs to the bacterial ribosomal protein bL17 family. In terms of assembly, part of the 50S ribosomal subunit. Contacts protein L32.

The protein is Large ribosomal subunit protein bL17 of Wolbachia pipientis subsp. Culex pipiens (strain wPip).